A 205-amino-acid polypeptide reads, in one-letter code: MADIIHLKAEQRTEFGKGAARRIRRDDKVPAVMYGHDHDPIHVTLDGHATLLALRTENPLLSIEIEGQKPMLALPKDVQRDVLKGFVRHVDLLTVRRGEKVDVNVALRITGESAPGTIAMTEFNEIEVQADLLNIPEVIEIDVTGLEAGTTIYLGDLKLPEGTSLLGDAEDVAATVAFPETEPVEDEESAGEDAQGESEEKAAKE.

Residues 178 to 205 (FPETEPVEDEESAGEDAQGESEEKAAKE) form a disordered region. A compositionally biased stretch (acidic residues) spans 182–197 (EPVEDEESAGEDAQGE).

This sequence belongs to the bacterial ribosomal protein bL25 family. CTC subfamily. In terms of assembly, part of the 50S ribosomal subunit; part of the 5S rRNA/L5/L18/L25 subcomplex. Contacts the 5S rRNA. Binds to the 5S rRNA independently of L5 and L18.

In terms of biological role, this is one of the proteins that binds to the 5S RNA in the ribosome where it forms part of the central protuberance. This chain is Large ribosomal subunit protein bL25, found in Cutibacterium acnes (strain DSM 16379 / KPA171202) (Propionibacterium acnes).